Reading from the N-terminus, the 942-residue chain is UvrABC system protein A (942 aa).

Position 32-39 (32-39 (GLSGSGKS)) interacts with ATP. Residues 251–278 (CPVCGFTVPELEPRLFSFNAPFGSCPTC) form a C4-type zinc finger. 2 consecutive ABC transporter domains span residues 308 to 589 (WNPI…KKSI) and 609 to 937 (GNGR…HYLK). 641-648 (GVSGSGKS) lines the ATP pocket. The C4-type zinc-finger motif lies at 740–766 (CEACSGDGIIKIEMHFLPDVYVPCEVC).

This sequence belongs to the ABC transporter superfamily. UvrA family. As to quaternary structure, forms a heterotetramer with UvrB during the search for lesions.

The protein resides in the cytoplasm. Its function is as follows. The UvrABC repair system catalyzes the recognition and processing of DNA lesions. UvrA is an ATPase and a DNA-binding protein. A damage recognition complex composed of 2 UvrA and 2 UvrB subunits scans DNA for abnormalities. When the presence of a lesion has been verified by UvrB, the UvrA molecules dissociate. The sequence is that of UvrABC system protein A from Streptococcus pyogenes serotype M18 (strain MGAS8232).